A 229-amino-acid chain; its full sequence is 2,3-bisphosphoglycerate-dependent phosphoglycerate mutase (229 aa).

Substrate-binding positions include 7 to 14, 20 to 21, arginine 59, 86 to 89, lysine 97, 113 to 114, and 182 to 183; these read RHGQSEWN, TG, ERHY, RR, and GN. The active-site Tele-phosphohistidine intermediate is histidine 8. Glutamate 86 (proton donor/acceptor) is an active-site residue.

The protein belongs to the phosphoglycerate mutase family. BPG-dependent PGAM subfamily.

The enzyme catalyses (2R)-2-phosphoglycerate = (2R)-3-phosphoglycerate. The protein operates within carbohydrate degradation; glycolysis; pyruvate from D-glyceraldehyde 3-phosphate: step 3/5. Its function is as follows. Catalyzes the interconversion of 2-phosphoglycerate and 3-phosphoglycerate. The polypeptide is 2,3-bisphosphoglycerate-dependent phosphoglycerate mutase (Listeria innocua serovar 6a (strain ATCC BAA-680 / CLIP 11262)).